The sequence spans 211 residues: UPF0329 protein ECU07_1880/ECU10_0020 (211 aa).

It belongs to the UPF0329 family.

The protein is UPF0329 protein ECU07_1880/ECU10_0020 of Encephalitozoon cuniculi (strain GB-M1) (Microsporidian parasite).